We begin with the raw amino-acid sequence, 275 residues long: 2-dehydro-3-deoxyphosphooctonate aldolase (275 aa).

This sequence belongs to the KdsA family.

The protein resides in the cytoplasm. It carries out the reaction D-arabinose 5-phosphate + phosphoenolpyruvate + H2O = 3-deoxy-alpha-D-manno-2-octulosonate-8-phosphate + phosphate. It functions in the pathway carbohydrate biosynthesis; 3-deoxy-D-manno-octulosonate biosynthesis; 3-deoxy-D-manno-octulosonate from D-ribulose 5-phosphate: step 2/3. It participates in bacterial outer membrane biogenesis; lipopolysaccharide biosynthesis. The chain is 2-dehydro-3-deoxyphosphooctonate aldolase from Francisella philomiragia subsp. philomiragia (strain ATCC 25017 / CCUG 19701 / FSC 153 / O#319-036).